The chain runs to 966 residues: Phosphoenolpyruvate carboxylase, housekeeping isozyme (966 aa).

Serine 11 is modified (phosphoserine). Active-site residues include histidine 172 and lysine 601.

The protein belongs to the PEPCase type 1 family. In terms of assembly, homotetramer. Mg(2+) is required as a cofactor.

It localises to the cytoplasm. It carries out the reaction oxaloacetate + phosphate = phosphoenolpyruvate + hydrogencarbonate. With respect to regulation, by light-reversible phosphorylation. Its function is as follows. Through the carboxylation of phosphoenolpyruvate (PEP) it forms oxaloacetate, a four-carbon dicarboxylic acid source for the tricarboxylic acid cycle. The chain is Phosphoenolpyruvate carboxylase, housekeeping isozyme from Saccharum hybrid (Sugarcane).